A 347-amino-acid chain; its full sequence is Eukaryotic translation initiation factor 3 subunit I (347 aa).

6 WD repeats span residues 8–47, 50–89, 91–135, 151–190, 193–232, and 290–329; these read GHER…RLGT, GHTG…VIHT, TAPV…VTKE, ENHK…FITS, LHTQ…QLKS, and GHFG…FDFK.

The protein belongs to the eIF-3 subunit I family. As to quaternary structure, component of the eukaryotic translation initiation factor 3 (eIF-3) complex.

It localises to the cytoplasm. In terms of biological role, component of the eukaryotic translation initiation factor 3 (eIF-3) complex, which is involved in protein synthesis of a specialized repertoire of mRNAs and, together with other initiation factors, stimulates binding of mRNA and methionyl-tRNAi to the 40S ribosome. The eIF-3 complex specifically targets and initiates translation of a subset of mRNAs involved in cell proliferation. The chain is Eukaryotic translation initiation factor 3 subunit I from Vanderwaltozyma polyspora (strain ATCC 22028 / DSM 70294 / BCRC 21397 / CBS 2163 / NBRC 10782 / NRRL Y-8283 / UCD 57-17) (Kluyveromyces polysporus).